The following is a 436-amino-acid chain: Prenyltransferase nscD (436 aa).

It belongs to the tryptophan dimethylallyltransferase family.

It participates in secondary metabolite biosynthesis. Prenyltransferase; part of the gene cluster that mediates the biosynthesis of neosartoricin B, a prenylated anthracenone that probably exhibits T-cell antiproliferative activity, suggestive of a physiological role as an immunosuppressive agent. The non-reducing polyketide synthase nscA probably synthesizes and cyclizes the decaketide backbone. The hydrolase nscB then mediates the product release through hydrolysis followed by spontaneous decarboxylation. The prenyltransferase nscD catalyzes the addition of the dimethylallyl group to the aromatic C5. The FAD-dependent monooxygenase nscC is then responsible for the stereospecific hydroxylation at C2. Neosartoricin B can be converted into two additional compounds neosartoricins C and D. Neosartoricin C is a spirocyclic compound that is cyclized through the attack of C3 hydroxyl on C14, followed by dehydration. On the other hand, neosartoricin D is a further cyclized compound in which attack of C2 on C14 in neosartoricin C results in the formation of the acetal-containing dioxabicyclo-octanone ring. Both of these compounds are novel and possibly represent related metabolites of the gene cluster. This chain is Prenyltransferase nscD, found in Trichophyton equinum (strain ATCC MYA-4606 / CBS 127.97) (Horse ringworm fungus).